A 339-amino-acid polypeptide reads, in one-letter code: Glyceraldehyde-3-phosphate dehydrogenase (339 aa).

NAD(+) is bound by residues 12 to 13, aspartate 39, arginine 84, and serine 127; that span reads RI. D-glyceraldehyde 3-phosphate-binding positions include 157-159, threonine 188, arginine 203, 216-217, and arginine 239; these read SCT and TG. Residue cysteine 158 is the Nucleophile of the active site. Position 320 (asparagine 320) interacts with NAD(+).

Belongs to the glyceraldehyde-3-phosphate dehydrogenase family. As to quaternary structure, homotetramer.

The protein resides in the cytoplasm. It catalyses the reaction D-glyceraldehyde 3-phosphate + phosphate + NAD(+) = (2R)-3-phospho-glyceroyl phosphate + NADH + H(+). It participates in carbohydrate degradation; glycolysis; pyruvate from D-glyceraldehyde 3-phosphate: step 1/5. In terms of biological role, catalyzes the oxidative phosphorylation of glyceraldehyde 3-phosphate (G3P) to 1,3-bisphosphoglycerate (BPG) using the cofactor NAD. The first reaction step involves the formation of a hemiacetal intermediate between G3P and a cysteine residue, and this hemiacetal intermediate is then oxidized to a thioester, with concomitant reduction of NAD to NADH. The reduced NADH is then exchanged with the second NAD, and the thioester is attacked by a nucleophilic inorganic phosphate to produce BPG. The chain is Glyceraldehyde-3-phosphate dehydrogenase (gap) from Mycobacterium bovis (strain ATCC BAA-935 / AF2122/97).